The following is a 166-amino-acid chain: NADPH-dependent 7-cyano-7-deazaguanine reductase (166 aa).

Cysteine 57 acts as the Thioimide intermediate in catalysis. Aspartate 64 functions as the Proton donor in the catalytic mechanism. Substrate-binding positions include 79 to 81 (VES) and 98 to 99 (HE).

It belongs to the GTP cyclohydrolase I family. QueF type 1 subfamily.

Its subcellular location is the cytoplasm. It catalyses the reaction 7-aminomethyl-7-carbaguanine + 2 NADP(+) = 7-cyano-7-deazaguanine + 2 NADPH + 3 H(+). The protein operates within tRNA modification; tRNA-queuosine biosynthesis. Its function is as follows. Catalyzes the NADPH-dependent reduction of 7-cyano-7-deazaguanine (preQ0) to 7-aminomethyl-7-deazaguanine (preQ1). The protein is NADPH-dependent 7-cyano-7-deazaguanine reductase of Alkaliphilus metalliredigens (strain QYMF).